The chain runs to 766 residues: UPF0313 protein PP_4872 (766 aa).

The 279-residue stretch at 371 to 649 (AYEMIRFSVN…KAFLRYHDPK (279 aa)) folds into the Radical SAM core domain. Residues Cys-385, Cys-389, and Cys-392 each contribute to the [4Fe-4S] cluster site. Positions 670–766 (GKHQLIPLHQ…KKPRQPVIPR (97 aa)) are disordered. Over residues 723-735 (KPWDKREKAKAEA) the composition is skewed to basic and acidic residues.

This sequence belongs to the UPF0313 family. It depends on [4Fe-4S] cluster as a cofactor.

The protein is UPF0313 protein PP_4872 of Pseudomonas putida (strain ATCC 47054 / DSM 6125 / CFBP 8728 / NCIMB 11950 / KT2440).